A 215-amino-acid chain; its full sequence is Protein Syd (215 aa).

The protein belongs to the Syd family.

The protein resides in the cell inner membrane. In terms of biological role, interacts with the SecY protein in vivo. May bind preferentially to an uncomplexed state of SecY, thus functioning either as a chelating agent for excess SecY in the cell or as a regulatory factor that negatively controls the translocase function. The protein is Protein Syd of Shewanella amazonensis (strain ATCC BAA-1098 / SB2B).